We begin with the raw amino-acid sequence, 180 residues long: Peptidyl-tRNA hydrolase (180 aa).

Residue Tyr-15 participates in tRNA binding. His-20 serves as the catalytic Proton acceptor. Positions 67, 69, and 115 each coordinate tRNA.

The protein belongs to the PTH family. In terms of assembly, monomer.

The protein resides in the cytoplasm. The enzyme catalyses an N-acyl-L-alpha-aminoacyl-tRNA + H2O = an N-acyl-L-amino acid + a tRNA + H(+). In terms of biological role, hydrolyzes ribosome-free peptidyl-tRNAs (with 1 or more amino acids incorporated), which drop off the ribosome during protein synthesis, or as a result of ribosome stalling. Its function is as follows. Catalyzes the release of premature peptidyl moieties from peptidyl-tRNA molecules trapped in stalled 50S ribosomal subunits, and thus maintains levels of free tRNAs and 50S ribosomes. The protein is Peptidyl-tRNA hydrolase of Chlamydia pneumoniae (Chlamydophila pneumoniae).